A 313-amino-acid polypeptide reads, in one-letter code: Deoxyribonucleoside regulator (313 aa).

A DNA-binding region (H-T-H motif) is located at residues Gln23 to Gln42.

This sequence belongs to the SorC transcriptional regulatory family. In terms of assembly, homooctamer.

Negative regulator of the dra-nupC-pdp operon. DeoR binds cooperatively to the operator DNA, which consists of a palindrome and a direct repeat sequence located 3' to the palindrome. The sequence is that of Deoxyribonucleoside regulator from Bacillus subtilis (strain 168).